A 190-amino-acid chain; its full sequence is Elongation factor P (190 aa).

An N6-(3,6-diaminohexanoyl)-5-hydroxylysine modification is found at Lys-34.

This sequence belongs to the elongation factor P family. Post-translationally, may be beta-lysylated on the epsilon-amino group of Lys-34 by the combined action of EpmA and EpmB, and then hydroxylated on the C5 position of the same residue by EpmC (if this protein is present). Lysylation is critical for the stimulatory effect of EF-P on peptide-bond formation. The lysylation moiety may extend toward the peptidyltransferase center and stabilize the terminal 3-CCA end of the tRNA. Hydroxylation of the C5 position on Lys-34 may allow additional potential stabilizing hydrogen-bond interactions with the P-tRNA.

The protein resides in the cytoplasm. Its pathway is protein biosynthesis; polypeptide chain elongation. Its function is as follows. Involved in peptide bond synthesis. Alleviates ribosome stalling that occurs when 3 or more consecutive Pro residues or the sequence PPG is present in a protein, possibly by augmenting the peptidyl transferase activity of the ribosome. Modification of Lys-34 is required for alleviation. In Psychrobacter arcticus (strain DSM 17307 / VKM B-2377 / 273-4), this protein is Elongation factor P.